The following is a 1036-amino-acid chain: uncharacterized protein (1036 aa).

The first 24 residues, 1 to 24, serve as a signal peptide directing secretion; that stretch reads MKRVGLIGVIMAALLVISATPVMA. Residues 1011–1033 traverse the membrane as a helical segment; the sequence is GGGVPGFEAVFAIAGLLAVAYLL.

Its subcellular location is the membrane. This is an uncharacterized protein from Archaeoglobus fulgidus (strain ATCC 49558 / DSM 4304 / JCM 9628 / NBRC 100126 / VC-16).